Reading from the N-terminus, the 796-residue chain is Molybdenum cofactor sulfurase (796 aa).

Lys-246 carries the N6-(pyridoxal phosphate)lysine modification. The active site involves Cys-418. Positions 650-796 (LRLLRQSSQR…LTCGDVVVVT (147 aa)) constitute an MOSC domain. At Ser-752 the chain carries Phosphoserine.

This sequence belongs to the class-V pyridoxal-phosphate-dependent aminotransferase family. MOCOS subfamily. Pyridoxal 5'-phosphate is required as a cofactor.

The catalysed reaction is Mo-molybdopterin + L-cysteine + AH2 = thio-Mo-molybdopterin + L-alanine + A + H2O. Sulfurates the molybdenum cofactor. Sulfation of molybdenum is essential for xanthine dehydrogenase (XDH) and aldehyde oxidase (ADO) enzymes in which molybdenum cofactor is liganded by 1 oxygen and 1 sulfur atom in active form. This chain is Molybdenum cofactor sulfurase, found in Drosophila persimilis (Fruit fly).